The following is a 106-amino-acid chain: Late cornified envelope protein 2A (106 aa).

Low complexity predominate over residues 1–10 (MSCQQNQQQC). The tract at residues 1–25 (MSCQQNQQQCQPPPKCPPKCPPKCP) is disordered. Positions 11 to 25 (QPPPKCPPKCPPKCP) are enriched in pro residues.

Belongs to the LCE family. Interacts with CYSRT1. In terms of tissue distribution, skin-specific. Expression was readily detected in adult trunk skin, adult arm skin, fetal skin, penal skin, vulva, esophagus and tongue. Not expressed in the cervix, rectum, lung, colon, or placenta.

Its function is as follows. Precursors of the cornified envelope of the stratum corneum. This Homo sapiens (Human) protein is Late cornified envelope protein 2A (LCE2A).